The chain runs to 254 residues: tRNA (guanine-N(1)-)-methyltransferase (254 aa).

Residues Gly-112 and 131 to 136 (IGDYIL) contribute to the S-adenosyl-L-methionine site.

It belongs to the RNA methyltransferase TrmD family. Homodimer.

The protein localises to the cytoplasm. It carries out the reaction guanosine(37) in tRNA + S-adenosyl-L-methionine = N(1)-methylguanosine(37) in tRNA + S-adenosyl-L-homocysteine + H(+). Functionally, specifically methylates guanosine-37 in various tRNAs. This chain is tRNA (guanine-N(1)-)-methyltransferase, found in Sulfurihydrogenibium sp. (strain YO3AOP1).